The sequence spans 163 residues: Putative ribose 5-phosphate isomerase (163 aa).

Residue 16-17 participates in D-ribulose 5-phosphate binding; that stretch reads DD. Cysteine 76 serves as the catalytic Proton acceptor. D-ribulose 5-phosphate is bound by residues 77 to 81, asparagine 110, arginine 120, and lysine 148; that span reads GTGLG.

This sequence belongs to the LacAB/RpiB family. Homodimer or homotetramer.

The protein is Putative ribose 5-phosphate isomerase of Coccidioides immitis (strain RS) (Valley fever fungus).